The chain runs to 98 residues: Large ribosomal subunit protein uL23 (98 aa).

Belongs to the universal ribosomal protein uL23 family. As to quaternary structure, part of the 50S ribosomal subunit. Contacts protein L29, and trigger factor when it is bound to the ribosome.

One of the early assembly proteins it binds 23S rRNA. One of the proteins that surrounds the polypeptide exit tunnel on the outside of the ribosome. Forms the main docking site for trigger factor binding to the ribosome. The protein is Large ribosomal subunit protein uL23 of Gluconacetobacter diazotrophicus (strain ATCC 49037 / DSM 5601 / CCUG 37298 / CIP 103539 / LMG 7603 / PAl5).